A 101-amino-acid chain; its full sequence is Small ribosomal subunit protein uS14 (101 aa).

The protein belongs to the universal ribosomal protein uS14 family. In terms of assembly, part of the 30S ribosomal subunit. Contacts proteins S3 and S10.

Binds 16S rRNA, required for the assembly of 30S particles and may also be responsible for determining the conformation of the 16S rRNA at the A site. In Pseudoalteromonas atlantica (strain T6c / ATCC BAA-1087), this protein is Small ribosomal subunit protein uS14.